Reading from the N-terminus, the 320-residue chain is Malate dehydrogenase (320 aa).

Residues 10-15 (GAGQIG) and Asp-34 each bind NAD(+). Arg-83 and Arg-89 together coordinate substrate. Residues Asn-96 and 119–121 (ITN) each bind NAD(+). Substrate contacts are provided by Asn-121 and Arg-152. Residue His-176 is the Proton acceptor of the active site.

This sequence belongs to the LDH/MDH superfamily. MDH type 3 family.

It catalyses the reaction (S)-malate + NAD(+) = oxaloacetate + NADH + H(+). In terms of biological role, catalyzes the reversible oxidation of malate to oxaloacetate. The protein is Malate dehydrogenase of Cereibacter sphaeroides (strain ATCC 17029 / ATH 2.4.9) (Rhodobacter sphaeroides).